A 121-amino-acid polypeptide reads, in one-letter code: Protein yippee-like At3g55890 (121 aa).

Positions 12–109 (NIYICKLCKT…LELYKISGPH (98 aa)) constitute a Yippee domain. Residues cysteine 16, cysteine 19, cysteine 72, and cysteine 75 each coordinate Zn(2+).

Belongs to the yippee family.

The sequence is that of Protein yippee-like At3g55890 from Arabidopsis thaliana (Mouse-ear cress).